The chain runs to 274 residues: Urease accessory protein UreD (274 aa).

Belongs to the UreD family. UreD, UreF and UreG form a complex that acts as a GTP-hydrolysis-dependent molecular chaperone, activating the urease apoprotein by helping to assemble the nickel containing metallocenter of UreC. The UreE protein probably delivers the nickel.

The protein localises to the cytoplasm. In terms of biological role, required for maturation of urease via the functional incorporation of the urease nickel metallocenter. This chain is Urease accessory protein UreD, found in Lachnoclostridium phytofermentans (strain ATCC 700394 / DSM 18823 / ISDg) (Clostridium phytofermentans).